The sequence spans 123 residues: Holo-[acyl-carrier-protein] synthase (123 aa).

Positions 8 and 56 each coordinate Mg(2+).

This sequence belongs to the P-Pant transferase superfamily. AcpS family. Mg(2+) is required as a cofactor.

It is found in the cytoplasm. It catalyses the reaction apo-[ACP] + CoA = holo-[ACP] + adenosine 3',5'-bisphosphate + H(+). Transfers the 4'-phosphopantetheine moiety from coenzyme A to a Ser of acyl-carrier-protein. This Clostridium beijerinckii (strain ATCC 51743 / NCIMB 8052) (Clostridium acetobutylicum) protein is Holo-[acyl-carrier-protein] synthase.